We begin with the raw amino-acid sequence, 124 residues long: Fluoride-specific ion channel FluC (124 aa).

A run of 4 helical transmembrane segments spans residues 5–25 (ILAVSAAGIAGTLLRFAAGTW), 38–58 (TLAVNLVGCLIIGLLYGWFLL), 69–89 (GLIVGFVGGLTTFSSFSLDTL), and 97–117 (ALIAFGYLGISVFGGLLATWA). Na(+)-binding residues include Gly76 and Thr79.

This sequence belongs to the fluoride channel Fluc/FEX (TC 1.A.43) family.

It is found in the cell inner membrane. It carries out the reaction fluoride(in) = fluoride(out). With respect to regulation, na(+) is not transported, but it plays an essential structural role and its presence is essential for fluoride channel function. Its function is as follows. Fluoride-specific ion channel. Important for reducing fluoride concentration in the cell, thus reducing its toxicity. The sequence is that of Fluoride-specific ion channel FluC from Pseudomonas fluorescens (strain SBW25).